We begin with the raw amino-acid sequence, 259 residues long: Phosphate import ATP-binding protein PstB (259 aa).

The 242-residue stretch at 13–254 (IQVRDLNFYY…PAQRQTEDYI (242 aa)) folds into the ABC transporter domain. Residue 45-52 (GPSGCGKS) participates in ATP binding.

It belongs to the ABC transporter superfamily. Phosphate importer (TC 3.A.1.7) family. As to quaternary structure, the complex is composed of two ATP-binding proteins (PstB), two transmembrane proteins (PstC and PstA) and a solute-binding protein (PstS).

It localises to the cell inner membrane. It catalyses the reaction phosphate(out) + ATP + H2O = ADP + 2 phosphate(in) + H(+). Its function is as follows. Part of the ABC transporter complex PstSACB involved in phosphate import. Responsible for energy coupling to the transport system. This Edwardsiella tarda protein is Phosphate import ATP-binding protein PstB.